A 437-amino-acid polypeptide reads, in one-letter code: Protein farnesyltransferase subunit beta (437 aa).

5 PFTB repeats span residues 123–164 (ATDV…CIIG), 174–215 (REKL…SLTN), 222–263 (FEGT…VILK), 270–312 (LKSL…PLLH), and 332–374 (QQAL…SIAQ). (2E,6E)-farnesyl diphosphate contacts are provided by residues 248–251 (HGGY) and 291–294 (RCNK). Positions 297 and 299 each coordinate Zn(2+). 300–303 (YSFW) contacts (2E,6E)-farnesyl diphosphate. Residue H362 participates in Zn(2+) binding. The residue at position 436 (T436) is a Phosphothreonine.

The protein belongs to the protein prenyltransferase subunit beta family. In terms of assembly, heterodimer of FNTA and FNTB. Zn(2+) serves as cofactor.

It catalyses the reaction L-cysteinyl-[protein] + (2E,6E)-farnesyl diphosphate = S-(2E,6E)-farnesyl-L-cysteinyl-[protein] + diphosphate. Its function is as follows. Essential subunit of the farnesyltransferase complex. Catalyzes the transfer of a farnesyl moiety from farnesyl diphosphate to a cysteine at the fourth position from the C-terminus of several proteins having the C-terminal sequence Cys-aliphatic-aliphatic-X. In Homo sapiens (Human), this protein is Protein farnesyltransferase subunit beta (FNTB).